The primary structure comprises 133 residues: Holo-[acyl-carrier-protein] synthase (133 aa).

Aspartate 8 and glutamate 57 together coordinate Mg(2+).

This sequence belongs to the P-Pant transferase superfamily. AcpS family. Mg(2+) is required as a cofactor.

It localises to the cytoplasm. The catalysed reaction is apo-[ACP] + CoA = holo-[ACP] + adenosine 3',5'-bisphosphate + H(+). Its function is as follows. Transfers the 4'-phosphopantetheine moiety from coenzyme A to a Ser of acyl-carrier-protein. The polypeptide is Holo-[acyl-carrier-protein] synthase (Bartonella tribocorum (strain CIP 105476 / IBS 506)).